Reading from the N-terminus, the 151-residue chain is Large ribosomal subunit protein bL9 (151 aa).

Belongs to the bacterial ribosomal protein bL9 family.

Binds to the 23S rRNA. This Dehalococcoides mccartyi (strain ATCC BAA-2100 / JCM 16839 / KCTC 5957 / BAV1) protein is Large ribosomal subunit protein bL9.